Reading from the N-terminus, the 483-residue chain is Trigger factor (483 aa).

Residues 166-251 (TDTVNIDYVG…INDVFTKEKP (86 aa)) enclose the PPIase FKBP-type domain. Positions 435 to 460 (GEEPKLSTTKKVVEPTEEKTRKDSKM) are enriched in basic and acidic residues. Positions 435 to 483 (GEEPKLSTTKKVVEPTEEKTRKDSKMSTKKPAAKPAAKPAAATKKPVKK) are disordered. Residues 467–483 (AKPAAKPAAATKKPVKK) are compositionally biased toward low complexity.

The protein belongs to the FKBP-type PPIase family. Tig subfamily.

Its subcellular location is the cytoplasm. The catalysed reaction is [protein]-peptidylproline (omega=180) = [protein]-peptidylproline (omega=0). Functionally, involved in protein export. Acts as a chaperone by maintaining the newly synthesized protein in an open conformation. Functions as a peptidyl-prolyl cis-trans isomerase. This Mycoplasma mobile (strain ATCC 43663 / 163K / NCTC 11711) (Mesomycoplasma mobile) protein is Trigger factor.